The sequence spans 54 residues: MEFHENRAKAPFIGLVQLWQAVRRWRRQMQTRRVLQQMSDERLKDIGLRREDVE.

This is an uncharacterized protein from Escherichia coli (strain K12).